The chain runs to 317 residues: Ribosomal protein L11 methyltransferase (317 aa).

4 residues coordinate S-adenosyl-L-methionine: Thr-158, Gly-179, Asp-201, and Asn-244.

Belongs to the methyltransferase superfamily. PrmA family.

Its subcellular location is the cytoplasm. The enzyme catalyses L-lysyl-[protein] + 3 S-adenosyl-L-methionine = N(6),N(6),N(6)-trimethyl-L-lysyl-[protein] + 3 S-adenosyl-L-homocysteine + 3 H(+). Functionally, methylates ribosomal protein L11. In Streptococcus thermophilus (strain CNRZ 1066), this protein is Ribosomal protein L11 methyltransferase.